Reading from the N-terminus, the 262-residue chain is Phosphonates import ATP-binding protein PhnC (262 aa).

The ABC transporter domain occupies 5-253 (IRVEKLAKTF…RFDHLYRSIN (249 aa)). 37–44 (GPSGSGKS) is an ATP binding site.

It belongs to the ABC transporter superfamily. Phosphonates importer (TC 3.A.1.9.1) family. The complex is composed of two ATP-binding proteins (PhnC), two transmembrane proteins (PhnE) and a solute-binding protein (PhnD).

The protein localises to the cell inner membrane. It catalyses the reaction phosphonate(out) + ATP + H2O = phosphonate(in) + ADP + phosphate + H(+). Its function is as follows. Part of the ABC transporter complex PhnCDE involved in phosphonates import. Responsible for energy coupling to the transport system. In Shigella flexneri serotype 5b (strain 8401), this protein is Phosphonates import ATP-binding protein PhnC.